An 84-amino-acid chain; its full sequence is Acyl carrier protein (84 aa).

In terms of domain architecture, Carrier spans 6–81 (EEILTGLAEI…DAVDYIANAT (76 aa)). Ser41 is modified (O-(pantetheine 4'-phosphoryl)serine).

Belongs to the acyl carrier protein (ACP) family. Post-translationally, 4'-phosphopantetheine is transferred from CoA to a specific serine of apo-ACP by AcpS. This modification is essential for activity because fatty acids are bound in thioester linkage to the sulfhydryl of the prosthetic group.

The protein resides in the cytoplasm. It participates in lipid metabolism; fatty acid biosynthesis. Its function is as follows. Carrier of the growing fatty acid chain in fatty acid biosynthesis. In Acidothermus cellulolyticus (strain ATCC 43068 / DSM 8971 / 11B), this protein is Acyl carrier protein.